The primary structure comprises 101 residues: Putative membrane protein insertion efficiency factor (101 aa).

The protein belongs to the UPF0161 family.

The protein resides in the cell inner membrane. Its function is as follows. Could be involved in insertion of integral membrane proteins into the membrane. This Methylobacterium sp. (strain 4-46) protein is Putative membrane protein insertion efficiency factor.